Consider the following 689-residue polypeptide: Glycine--tRNA ligase beta subunit (689 aa).

This sequence belongs to the class-II aminoacyl-tRNA synthetase family. Tetramer of two alpha and two beta subunits.

It is found in the cytoplasm. The catalysed reaction is tRNA(Gly) + glycine + ATP = glycyl-tRNA(Gly) + AMP + diphosphate. The sequence is that of Glycine--tRNA ligase beta subunit from Salmonella agona (strain SL483).